The following is a 399-amino-acid chain: Acetate kinase (399 aa).

Asparagine 7 provides a ligand contact to Mg(2+). Lysine 14 provides a ligand contact to ATP. Arginine 91 serves as a coordination point for substrate. Aspartate 148 serves as the catalytic Proton donor/acceptor. ATP is bound by residues 208-212 and 283-285; these read HLGNG and DFR. Glutamate 384 lines the Mg(2+) pocket.

This sequence belongs to the acetokinase family. As to quaternary structure, homodimer. The cofactor is Mg(2+). It depends on Mn(2+) as a cofactor.

The protein resides in the cytoplasm. The catalysed reaction is acetate + ATP = acetyl phosphate + ADP. It functions in the pathway metabolic intermediate biosynthesis; acetyl-CoA biosynthesis; acetyl-CoA from acetate: step 1/2. Its function is as follows. Catalyzes the formation of acetyl phosphate from acetate and ATP. Can also catalyze the reverse reaction. The sequence is that of Acetate kinase from Dictyoglomus thermophilum (strain ATCC 35947 / DSM 3960 / H-6-12).